The primary structure comprises 196 residues: MEEKNKKGKIIIISGPSGVGKKTIIDQVINNVDLNLTYSISMTTRLPREHEKNGVDYFFVSEEEFNSAIEKGELLEWAEFANNKYGTPIKNLYKLIGENKNVILEIEVQGATKVKDILNREDYISIFLIPPSIRELKRRLKIRDTETKEKIKQRIKRAKVELKLQNEYDFIILNDDAKNAADKLRHILYEKVLEKK.

Residues 8–189 (GKIIIISGPS…AADKLRHILY (182 aa)) enclose the Guanylate kinase-like domain. 15–22 (GPSGVGKK) is an ATP binding site.

This sequence belongs to the guanylate kinase family.

It localises to the cytoplasm. The enzyme catalyses GMP + ATP = GDP + ADP. Its function is as follows. Essential for recycling GMP and indirectly, cGMP. This Malacoplasma penetrans (strain HF-2) (Mycoplasma penetrans) protein is Guanylate kinase.